The following is a 250-amino-acid chain: Ribosomal RNA small subunit methyltransferase J (250 aa).

S-adenosyl-L-methionine is bound by residues 96–97 (RD) and D168.

The protein belongs to the methyltransferase superfamily. RsmJ family.

The protein localises to the cytoplasm. It carries out the reaction guanosine(1516) in 16S rRNA + S-adenosyl-L-methionine = N(2)-methylguanosine(1516) in 16S rRNA + S-adenosyl-L-homocysteine + H(+). Functionally, specifically methylates the guanosine in position 1516 of 16S rRNA. The sequence is that of Ribosomal RNA small subunit methyltransferase J from Neisseria gonorrhoeae (strain ATCC 700825 / FA 1090).